Consider the following 620-residue polypeptide: Chaperone protein HscA homolog (620 aa).

It belongs to the heat shock protein 70 family.

Its function is as follows. Chaperone involved in the maturation of iron-sulfur cluster-containing proteins. Has a low intrinsic ATPase activity which is markedly stimulated by HscB. This chain is Chaperone protein HscA homolog, found in Shewanella baltica (strain OS155 / ATCC BAA-1091).